The primary structure comprises 1049 residues: Self-sufficient cytochrome P450 monooxygenase CYP505E4 (1049 aa).

Residue Cys405 coordinates heme. Polar residues predominate over residues 461–470 (SATALSQHNM). The tract at residues 461–491 (SATALSQHNMSAGATASPGSSTHLAGDENGQ) is disordered. Residues 471–482 (SAGATASPGSST) are compositionally biased toward low complexity. Residues 499–640 (ISFFYGSNSG…DLEVWEETNL (142 aa)) form the Flavodoxin-like domain. FMN-binding positions include 505–509 (SNSGT) and 584–616 (VFGCGHQDWTKTFYRIPILIDDLMHKAGATRLT). In terms of domain architecture, FAD-binding FR-type spans 678 to 906 (RDLVEGKVTA…RPAKDAFHLP (229 aa)).

This sequence in the N-terminal section; belongs to the cytochrome P450 family. The cofactor is FAD. It depends on FMN as a cofactor. Heme serves as cofactor.

It carries out the reaction 2 oxidized [cytochrome P450] + NADPH = 2 reduced [cytochrome P450] + NADP(+) + H(+). The catalysed reaction is an organic molecule + reduced [NADPH--hemoprotein reductase] + O2 = an alcohol + oxidized [NADPH--hemoprotein reductase] + H2O + H(+). The enzyme catalyses dodecanoate + reduced [NADPH--hemoprotein reductase] + O2 = 5-hydroxydodecanoate + oxidized [NADPH--hemoprotein reductase] + H2O + H(+). It catalyses the reaction dodecan-1-ol + reduced [NADPH--hemoprotein reductase] + O2 = 1,5-dodecanediol + oxidized [NADPH--hemoprotein reductase] + H2O + H(+). It carries out the reaction dodecanoate + reduced [NADPH--hemoprotein reductase] + O2 = 9-hydroxydodecanoate + oxidized [NADPH--hemoprotein reductase] + H2O + H(+). The catalysed reaction is dodecan-1-ol + reduced [NADPH--hemoprotein reductase] + O2 = 1,4-dodecanediol + oxidized [NADPH--hemoprotein reductase] + H2O + H(+). The enzyme catalyses dodecan-1-ol + reduced [NADPH--hemoprotein reductase] + O2 = 1,6-dodecanediol + oxidized [NADPH--hemoprotein reductase] + H2O + H(+). Self-sufficient cytochrome P450 monooxygenase that catalyzes the regioselective in-chain hydroxylation of alkanes, fatty alcohols, and fatty acids at the omega-7 position. Performs hydroxylation of C10-C16 n-alkanes and C12 and C14 fatty alcohols; and thereby enables the one step biocatalytic synthesis of rare alcohols such as 5-dodecanol and 7-tetradecanol. Converts 1-dodecanol into 1,5-dodecanediol as major product with very little sub-terminally hydroxylated products with the 1,4-dodecanediol and 1,6-dodecanediol more abundant. Converts dodecanoic acid to 5-hydroxydodecanoic acid which can be further converted into delta-dodecalactone by lactonization of the 5-hydroxy acid at low pH. Also gives sub-terminal hydroxylation of dodecanoic acid with 9-hydroxydodecanoic acid being the second most abundant product. Does not show any significant activity toward tetradecanoic acid. The sequence is that of Self-sufficient cytochrome P450 monooxygenase CYP505E4 from Penicillium camemberti (strain FM 013).